A 1079-amino-acid polypeptide reads, in one-letter code: Alpha-mannosidase C (1079 aa).

The signal sequence occupies residues 1-22 (MFYKTFGFLFIYLIILISGTLS). Residues His-44 and Asp-46 each coordinate Zn(2+). 2 N-linked (GlcNAc...) asparagine glycosylation sites follow: Asn-60 and Asn-96. Position 158 (Asp-158) interacts with Zn(2+). The active-site Nucleophile is Asp-158. Asn-192, Asn-222, Asn-248, and Asn-467 each carry an N-linked (GlcNAc...) asparagine glycan. A Zn(2+)-binding site is contributed by His-475. 10 N-linked (GlcNAc...) asparagine glycosylation sites follow: Asn-516, Asn-527, Asn-589, Asn-760, Asn-769, Asn-848, Asn-872, Asn-912, Asn-1040, and Asn-1057.

Belongs to the glycosyl hydrolase 38 family. Zn(2+) is required as a cofactor.

Its subcellular location is the secreted. It catalyses the reaction Hydrolysis of terminal, non-reducing alpha-D-mannose residues in alpha-D-mannosides.. In Dictyostelium discoideum (Social amoeba), this protein is Alpha-mannosidase C (manC).